A 305-amino-acid polypeptide reads, in one-letter code: Nitrogen assimilation regulatory protein nac (305 aa).

The HTH lysR-type domain maps to 1-58 (MNLRRLKYFVKIVDIGSLTQAAEVLHIAQPALSQQVATLEGEMDQQLLIRTKRGVTPT). The H-T-H motif DNA-binding region spans 18–37 (LTQAAEVLHIAQPALSQQVA).

Belongs to the LysR transcriptional regulatory family.

Transcriptional activator for the hut, put and ure operons and repressor for the gdh and gltB operons in response to nitrogen limitation. Negative regulator of its own expression. This chain is Nitrogen assimilation regulatory protein nac (nac), found in Klebsiella aerogenes (Enterobacter aerogenes).